Consider the following 102-residue polypeptide: Outer membrane protein assembly factor BamE (102 aa).

The N-terminal stretch at Met1 to Ser20 is a signal peptide.

Belongs to the BamE family. Part of the Bam complex.

The protein resides in the cell outer membrane. Part of the outer membrane protein assembly complex, which is involved in assembly and insertion of beta-barrel proteins into the outer membrane. The sequence is that of Outer membrane protein assembly factor BamE from Buchnera aphidicola subsp. Acyrthosiphon pisum (strain APS) (Acyrthosiphon pisum symbiotic bacterium).